Here is a 365-residue protein sequence, read N- to C-terminus: Chaperone protein DnaJ (365 aa).

The J domain occupies 4–70; it reads DYYKILGVDR…EKRRIYDQTG (67 aa). The CR-type zinc-finger motif lies at 139–220; that stretch reads GTEKRIKFRR…CNGTGTIVVD (82 aa). Zn(2+)-binding residues include Cys-152, Cys-155, Cys-168, Cys-171, Cys-194, Cys-197, Cys-208, and Cys-211. 4 CXXCXGXG motif repeats span residues 152–159, 168–175, 194–201, and 208–215; these read CPDCKGTG, CPTCHGTG, CNTCGGKG, and CPRCNGTG.

It belongs to the DnaJ family. As to quaternary structure, homodimer. Requires Zn(2+) as cofactor.

It is found in the cytoplasm. Its function is as follows. Participates actively in the response to hyperosmotic and heat shock by preventing the aggregation of stress-denatured proteins and by disaggregating proteins, also in an autonomous, DnaK-independent fashion. Unfolded proteins bind initially to DnaJ; upon interaction with the DnaJ-bound protein, DnaK hydrolyzes its bound ATP, resulting in the formation of a stable complex. GrpE releases ADP from DnaK; ATP binding to DnaK triggers the release of the substrate protein, thus completing the reaction cycle. Several rounds of ATP-dependent interactions between DnaJ, DnaK and GrpE are required for fully efficient folding. Also involved, together with DnaK and GrpE, in the DNA replication of plasmids through activation of initiation proteins. The polypeptide is Chaperone protein DnaJ (Thermoplasma volcanium (strain ATCC 51530 / DSM 4299 / JCM 9571 / NBRC 15438 / GSS1)).